The following is a 235-amino-acid chain: Peptidyl-tRNA hydrolase (235 aa).

Y14 provides a ligand contact to tRNA. H19 functions as the Proton acceptor in the catalytic mechanism. F64, N66, and N112 together coordinate tRNA. The disordered stretch occupies residues 188–235; the sequence is APARNSGTRPDNPGKGSPEKPAAKPANDPIAEPPSLSDRLRALTERFR. The segment covering 225 to 235 has biased composition (basic and acidic residues); the sequence is DRLRALTERFR.

It belongs to the PTH family. In terms of assembly, monomer.

It is found in the cytoplasm. It carries out the reaction an N-acyl-L-alpha-aminoacyl-tRNA + H2O = an N-acyl-L-amino acid + a tRNA + H(+). In terms of biological role, hydrolyzes ribosome-free peptidyl-tRNAs (with 1 or more amino acids incorporated), which drop off the ribosome during protein synthesis, or as a result of ribosome stalling. Its function is as follows. Catalyzes the release of premature peptidyl moieties from peptidyl-tRNA molecules trapped in stalled 50S ribosomal subunits, and thus maintains levels of free tRNAs and 50S ribosomes. The protein is Peptidyl-tRNA hydrolase of Paracoccus denitrificans (strain Pd 1222).